The following is a 92-amino-acid chain: Evasin P675 (92 aa).

The first 24 residues, 1-24, serve as a signal peptide directing secretion; it reads MEVKTFAFLQIAVIIALGLHLAPA. Cystine bridges form between Cys44–Cys63, Cys48–Cys65, and Cys59–Cys76. Residue Asn47 is glycosylated (N-linked (GlcNAc...) asparagine). N-linked (GlcNAc...) asparagine glycosylation is present at Asn70.

It is found in the secreted. In terms of biological role, salivary chemokine-binding protein which binds to host chemokines CXCL1, CXCL2, CXCL3, CXCL4, CXCL5, CXCL6, CXCL10, CXCL11 and CXCL13. This chain is Evasin P675, found in Ixodes ricinus (Common tick).